The following is a 638-amino-acid chain: LIM domain kinase 2 (638 aa).

LIM zinc-binding domains follow at residues 12–63 (CRGC…CHKD) and 72–124 (CHGC…CGKC). The 88-residue stretch at 152 to 239 (LISMPATTEC…TLQLLIEHDP (88 aa)) folds into the PDZ domain. At T210 the chain carries Phosphothreonine. The tract at residues 255-304 (PHMQSTGHTLMLSTLDTKENQEGTLRRRSLRRSNSISKSPGPSSPKEPLL) is disordered. Residues 257–269 (MQSTGHTLMLSTL) are compositionally biased toward polar residues. Basic and acidic residues predominate over residues 270 to 279 (DTKENQEGTL). Positions 286–304 (RSNSISKSPGPSSPKEPLL) are enriched in low complexity. S293 and S298 each carry phosphoserine. The region spanning 331-608 (LIHGEVLGKG…DSFEALSLFL (278 aa)) is the Protein kinase domain. Residues 337–345 (LGKGFFGQA) and K360 contribute to the ATP site. Residue D451 is part of the active site. A Phosphothreonine; by ROCK1 and CDC42BP modification is found at T505.

The protein belongs to the protein kinase superfamily. TKL Ser/Thr protein kinase family. In terms of assembly, binds ROCK1 and MARF1. Interacts with NISCH. Post-translationally, phosphorylated on serine and/or threonine residues by ROCK1. Specifically expressed in the testes.

The protein resides in the cytoplasm. The protein localises to the cytoskeleton. It is found in the spindle. Its subcellular location is the microtubule organizing center. It localises to the centrosome. The protein resides in the nucleus. The protein localises to the perinuclear region. It carries out the reaction L-seryl-[protein] + ATP = O-phospho-L-seryl-[protein] + ADP + H(+). The catalysed reaction is L-threonyl-[protein] + ATP = O-phospho-L-threonyl-[protein] + ADP + H(+). Serine/threonine-protein kinase that plays an essential role in the regulation of actin filament dynamics. Acts downstream of several Rho family GTPase signal transduction pathways. Involved in astral microtubule organization and mitotic spindle orientation during early stages of mitosis by mediating phosphorylation of TPPP. Displays serine/threonine-specific phosphorylation of myelin basic protein and histone (MBP) in vitro. Suppresses ciliogenesis via multiple pathways; phosphorylation of CFL1, suppression of directional trafficking of ciliary vesicles to the ciliary base, and by facilitating YAP1 nuclear localization where it acts as a transcriptional corepressor of the TEAD4 target genes AURKA and PLK1. The protein is LIM domain kinase 2 (Limk2) of Mus musculus (Mouse).